A 215-amino-acid chain; its full sequence is FMN-dependent NADH:quinone oxidoreductase (215 aa).

Residue serine 17 to serine 19 coordinates FMN.

It belongs to the azoreductase type 1 family. Homodimer. The cofactor is FMN.

It carries out the reaction 2 a quinone + NADH + H(+) = 2 a 1,4-benzosemiquinone + NAD(+). It catalyses the reaction N,N-dimethyl-1,4-phenylenediamine + anthranilate + 2 NAD(+) = 2-(4-dimethylaminophenyl)diazenylbenzoate + 2 NADH + 2 H(+). In terms of biological role, quinone reductase that provides resistance to thiol-specific stress caused by electrophilic quinones. Also exhibits azoreductase activity. Catalyzes the reductive cleavage of the azo bond in aromatic azo compounds to the corresponding amines. This chain is FMN-dependent NADH:quinone oxidoreductase, found in Clostridium botulinum (strain Alaska E43 / Type E3).